The chain runs to 102 residues: PE family immunomodulator PE5 (102 aa).

The PE domain occupies 3-92; sequence LRVVPEGLAA…GASYLAGDAA (90 aa).

This sequence belongs to the mycobacterial PE family.

The protein localises to the secreted. It is found in the cell envelope. Its subcellular location is the cell surface. In terms of biological role, important for the siderophore-mediated iron-acquisition function of ESX-3. May play a pivotal role in the evasion of host immune response by M.tuberculosis. Mediates production of IL-10 via activation of the p38 and ERK1/2 mitogen-activated protein kinase (MAPK) signaling pathways. The protein is PE family immunomodulator PE5 of Mycobacterium tuberculosis (strain ATCC 25618 / H37Rv).